A 366-amino-acid polypeptide reads, in one-letter code: S-adenosylmethionine:tRNA ribosyltransferase-isomerase (366 aa).

This sequence belongs to the QueA family. In terms of assembly, monomer.

It is found in the cytoplasm. The enzyme catalyses 7-aminomethyl-7-carbaguanosine(34) in tRNA + S-adenosyl-L-methionine = epoxyqueuosine(34) in tRNA + adenine + L-methionine + 2 H(+). It functions in the pathway tRNA modification; tRNA-queuosine biosynthesis. In terms of biological role, transfers and isomerizes the ribose moiety from AdoMet to the 7-aminomethyl group of 7-deazaguanine (preQ1-tRNA) to give epoxyqueuosine (oQ-tRNA). The sequence is that of S-adenosylmethionine:tRNA ribosyltransferase-isomerase from Agrobacterium fabrum (strain C58 / ATCC 33970) (Agrobacterium tumefaciens (strain C58)).